Consider the following 523-residue polypeptide: MGRGSKMIDLEALPHLPGCYLFKDEEGIVLYVGKAKDLKKRVSSYFQKRDHDPKTASLMQFARGLDFIVTNTEVEAFLLENTLIKKHWPRYNIMLKDSKRYACIHLTGEKFPRIRIARKNTGEGEFFGPFVSARERDYIFEVVRKTFQLRTCRKMPSRACLRYHIGACSGPCISSVSVEEYGEKVKKAISVLKGNIRELIESMETEMKEMAAKQMFEQAMELRDEIAALEYLQEKQNMERQKKYDEDILNYIVRDNNVYLMLFKVYKGTLEDKQDFVFAFGEDFLEEFLVQYYSENDPPEELIVPEPLDESLVEFLAHVKGKKVKVAVPKQGDKKELLDLVLKNVEIGFFGDRKKLEALQSKLSLPKIPNVIECFDISHLSGTATVGSMVQFRGGRPDKHNYRRFKIESVEGIDDFASIAEVVRRRYSRLLEDKHEMPDLIIIDGGKGQLSSAFQELRKLRVKVPIISIAKREEEIYVPGLKSPLPIKKDEKASLFVQEIRDEAHRFAINYNRLLRQKALIQK.

The GIY-YIG domain occupies 15 to 93 (HLPGCYLFKD…IKKHWPRYNI (79 aa)). In terms of domain architecture, UVR spans 197-232 (RELIESMETEMKEMAAKQMFEQAMELRDEIAALEYL).

It belongs to the UvrC family. Interacts with UvrB in an incision complex.

The protein localises to the cytoplasm. The UvrABC repair system catalyzes the recognition and processing of DNA lesions. UvrC both incises the 5' and 3' sides of the lesion. The N-terminal half is responsible for the 3' incision and the C-terminal half is responsible for the 5' incision. The protein is UvrABC system protein C of Methanosarcina mazei (strain ATCC BAA-159 / DSM 3647 / Goe1 / Go1 / JCM 11833 / OCM 88) (Methanosarcina frisia).